We begin with the raw amino-acid sequence, 148 residues long: MATKIKLQRLGKMREPHYRIVVADARTKRDGRVIEAIGQYHPKSDPSIIKVDAERAQHWLSVGAQPTEPVLAILKVTGDWQKFKNLPAPPPMKVAEPKADKREIFQAAARAAAGAEDRPATTPKKAKKAASADGADAPAADAPTAAGQ.

The tract at residues 107 to 148 (AAARAAAGAEDRPATTPKKAKKAASADGADAPAADAPTAAGQ) is disordered. The segment covering 129 to 148 (AASADGADAPAADAPTAAGQ) has biased composition (low complexity).

The protein belongs to the bacterial ribosomal protein bS16 family.

This is Small ribosomal subunit protein bS16 from Frankia alni (strain DSM 45986 / CECT 9034 / ACN14a).